A 109-amino-acid polypeptide reads, in one-letter code: Somatostatin-2 (109 aa).

An N-terminal signal peptide occupies residues 1–16; it reads MQFLASLVSFLLVVWS. Residues 17–80 constitute a propeptide that is removed on maturation; the sequence is VKATALPVED…EPLENKLEER (64 aa). Cys98 and Cys109 are disulfide-bonded.

The protein belongs to the somatostatin family.

The protein resides in the secreted. In terms of biological role, somatostatin inhibits the release of somatotropin. This is Somatostatin-2 (sst2) from Protopterus annectens (African lungfish).